The sequence spans 60 residues: UPF0337 protein SAV1625 (60 aa).

A disordered region spans residues Val18 to Lys41. Basic and acidic residues predominate over residues Asp23–Lys41.

This sequence belongs to the UPF0337 (CsbD) family.

This chain is UPF0337 protein SAV1625, found in Staphylococcus aureus (strain Mu50 / ATCC 700699).